Consider the following 1072-residue polypeptide: RIMS-binding protein 2 (1072 aa).

The SH3 1 domain maps to 181 to 248; sequence GKVHLCVARY…PSNFVDFIQD (68 aa). 3 consecutive Fibronectin type-III domains span residues 311–404, 407–489, and 503–604; these read VPYP…GKDV, APSQ…KKEA, and PPQD…VPPA. 2 disordered regions span residues 597 to 681 and 713 to 800; these read PDLL…APVS and SAGQ…TSHN. Positions 599–615 are enriched in pro residues; that stretch reads LLVPPAPHPRTAPPPKP. Over residues 620–635 the composition is skewed to basic and acidic residues; it reads MDTKDQHLGPHVKVDE. Residues 660 to 670 are compositionally biased toward low complexity; sequence GPGRRSPSPSR. Phosphoserine occurs at positions 720 and 728. 2 stretches are compositionally biased toward basic and acidic residues: residues 730 to 743 and 754 to 765; these read EVKR…DFLK and CHGDEYHTESSR. Residues 771–781 show a composition bias toward acidic residues; it reads DIMEEDEEELY. Phosphoserine occurs at positions 852 and 859. Threonine 861 is modified (phosphothreonine). 2 SH3 domains span residues 868–936 and 972–1039; these read LPAR…EIHA and VPTR…EVPD. The tract at residues 1044–1072 is disordered; it reads HLSDAPPHYSHDPPMRSKAKRKKSVHFTP. Residues 1060-1072 show a composition bias toward basic residues; sequence SKAKRKKSVHFTP.

This sequence belongs to the RIMBP family. In terms of assembly, interacts with RIMS1, RIMS2, CACNA1D and CACNA1B, and potentially with other Ca(2+) channel alpha-1 isoforms.

The protein resides in the cell membrane. It localises to the synapse. Plays a role in the synaptic transmission as bifunctional linker that interacts simultaneously with RIMS1, RIMS2, CACNA1D and CACNA1B. This is RIMS-binding protein 2 (Rimbp2) from Mus musculus (Mouse).